Consider the following 428-residue polypeptide: uncharacterized protein (428 aa).

Zn(2+) is bound at residue His68. Residue Glu71 is the Proton acceptor of the active site. His72 and Glu143 together coordinate Zn(2+).

It belongs to the peptidase M16 family. Zn(2+) serves as cofactor.

This is an uncharacterized protein from Bacillus subtilis (strain 168).